Here is a 317-residue protein sequence, read N- to C-terminus: Melanocyte-stimulating hormone receptor (317 aa).

Residues 1 to 37 (MPALGSPRRLLGSLNCTPPATLPLTLAPNRTGPQCLE) are Extracellular-facing. Asn-29 is a glycosylation site (N-linked (GlcNAc...) asparagine). A helical membrane pass occupies residues 38–63 (VSIPDGLFLSLGLVSLVENVLVVAAI). Residues 64–72 (AKNRNLHSP) are Cytoplasmic-facing. The helical transmembrane segment at 73-93 (MYYFICCLAMSDLLVSVSNVL) threads the bilayer. The Extracellular portion of the chain corresponds to 94–118 (ETAVMLLLEAGVLATRAAVVQQLDN). A helical transmembrane segment spans residues 119–140 (VIDVLICSSMVSSLCFLGAIAV). At 141 to 163 (DRYISIFYALRYHSVVTLPRAWR) the chain is on the cytoplasmic side. A helical transmembrane segment spans residues 164-183 (IIAAIWVASILTSVLSITYY). Topologically, residues 184–191 (NHTVVLLC) are extracellular. A helical membrane pass occupies residues 192 to 211 (LVGFFIAMLALMAVLYVHML). The Cytoplasmic segment spans residues 212–240 (ARACQHARGIARLQKRQRPIHQGFGLKGA). The helical transmembrane segment at 241–266 (ATLTILLGVFFLCWGPFFLHLSLIVL) threads the bilayer. At 267-279 (CPQHPTCGCIFKN) the chain is on the extracellular side. Residues 280-300 (FNLFLALIICNAIVDPLIYAF) traverse the membrane as a helical segment. The Cytoplasmic portion of the chain corresponds to 301-317 (RSQELRKTLQEVLQCSW). Cys-315 carries S-palmitoyl cysteine lipidation.

Belongs to the G-protein coupled receptor 1 family. In terms of assembly, interacts with MGRN1, but does not undergo MGRN1-mediated ubiquitination; this interaction competes with GNAS-binding and thus inhibits agonist-induced cAMP production. Interacts with OPN3; the interaction results in a decrease in MC1R-mediated cAMP signaling and ultimately a decrease in melanin production in melanocytes.

It localises to the cell membrane. Functionally, receptor for MSH (alpha, beta and gamma) and ACTH. The activity of this receptor is mediated by G proteins which activate adenylate cyclase. Mediates melanogenesis, the production of eumelanin (black/brown) and phaeomelanin (red/yellow), via regulation of cAMP signaling in melanocytes. This chain is Melanocyte-stimulating hormone receptor (MC1R), found in Capra hircus (Goat).